The sequence spans 69 residues: Conotoxin Cal12.1p5 (69 aa).

Positions 1–23 (DLITNSYTRGKPRHVTSWRNLKT) are excised as a propeptide.

Contains 4 disulfide bonds. Expressed by the venom duct.

It localises to the secreted. The chain is Conotoxin Cal12.1p5 from Californiconus californicus (California cone).